The following is a 293-amino-acid chain: Aromatic amino acid exporter YddG (293 aa).

Topologically, residues 1-6 (MTSQKA) are cytoplasmic. The helical transmembrane segment at 7–27 (TLIGLVAIVLWSTMVGLIRGV) threads the bilayer. Positions 15–137 (VLWSTMVGLI…IALTGVCWVL (123 aa)) constitute an EamA 1 domain. At 28–33 (SEGLGP) the chain is on the periplasmic side. The helical transmembrane segment at 34–54 (VGGAAMIYSLSGLLLIFTVGL) threads the bilayer. Residues 55-63 (PDIRRFPGR) are Cytoplasmic-facing. A helical transmembrane segment spans residues 64 to 84 (YLIAGSVLFVSYEICLALSLG). Topologically, residues 85–92 (YAATRHQA) are periplasmic. The chain crosses the membrane as a helical span at residues 93-113 (IEVGMVNYLWPSLTILFAILF). At 114–119 (NGQKTN) the chain is on the cytoplasmic side. Residues 120–140 (WLIVPGLLIALTGVCWVLGGE) traverse the membrane as a helical segment. Topologically, residues 141–147 (NGLNPGE) are periplasmic. The chain crosses the membrane as a helical span at residues 148–168 (IISNVATSPLSYLLAFLGAFI). The 119-residue stretch at 167–285 (FIWATYCTVT…AVMVCVGSLL (119 aa)) folds into the EamA 2 domain. Topologically, residues 169–182 (WATYCTVTNKYARG) are cytoplasmic. Residues 183-203 (FNGITVFVLLTAVALWLHYFL) form a helical membrane-spanning segment. The Periplasmic portion of the chain corresponds to 204–207 (TPQP). The chain crosses the membrane as a helical span at residues 208 to 228 (AMIFSLPVIAKLFTAALTLGF). Topologically, residues 229 to 243 (AYAAWNVGILHGNVT) are cytoplasmic. The chain crosses the membrane as a helical span at residues 244 to 264 (IMAVGSYFTPVMSSALAALLL). At 265-267 (SSP) the chain is on the periplasmic side. A helical membrane pass occupies residues 268–288 (LSFSFWQGAVMVCVGSLLCWL). Topologically, residues 289-293 (ATRRR) are cytoplasmic.

It belongs to the drug/metabolite transporter (DMT) superfamily. Aromatic amino acid/paraquat exporter (ArAA/P-E) (TC 2.A.7.17) family.

It is found in the cell inner membrane. Its function is as follows. Amino acid transporter with broad substrate specificity. Required for resistance to methyl viologen. May function with OmpD porin. The sequence is that of Aromatic amino acid exporter YddG (yddG) from Salmonella typhimurium (strain 14028s / SGSC 2262).